A 242-amino-acid polypeptide reads, in one-letter code: N-acetylmuramate alpha-1-phosphate uridylyltransferase (242 aa).

UTP is bound by residues 16-18 (GTR) and K28. Residue N113 coordinates substrate. Mg(2+) is bound at residue D115. Position 158 (D158) interacts with substrate.

The protein belongs to the nucleotidyltransferase MurU family. As to quaternary structure, monomer. Mg(2+) is required as a cofactor.

It carries out the reaction N-acetyl-alpha-D-muramate 1-phosphate + UDP + H(+) = UDP-N-acetyl-alpha-D-muramate + phosphate. It functions in the pathway cell wall biogenesis; peptidoglycan recycling. In terms of biological role, catalyzes the formation of UDP-N-acetylmuramate (UDP-MurNAc), a crucial precursor of the bacterial peptidoglycan cell wall, from UTP and MurNAc-alpha-1P. Is likely involved in peptidoglycan recycling as part of a cell wall recycling pathway that bypasses de novo biosynthesis of the peptidoglycan precursor UDP-MurNAc. Is able to complement the fosfomycin sensitivity phenotype of a P.putida mutant lacking murU. In Caulobacter vibrioides (strain ATCC 19089 / CIP 103742 / CB 15) (Caulobacter crescentus), this protein is N-acetylmuramate alpha-1-phosphate uridylyltransferase.